A 399-amino-acid polypeptide reads, in one-letter code: MAREKFERNKPHVNIGTIGHVDHGKTTLTAAITNVLAKKGQAKVQDYADIDGAPEERERGITINTAHVEYETDTRHYAHVDCPGHADYVKNMITGAAQMDGAILVCAATDGPMAQTKEHILLAKQVGVPALVVALNKCDMVDDEEIIELVEMEIRELLSSYDFPGDDIPVVQVSGLKAIEGEAEWEAKIDELMQAVDANIPEPEREVDKPFLMAIEDVFSITGRGTVATGRIERGIVKVGEEIEIVGIKDTRKTTVTGVEMFRKLLDEGMAGDNVGLLLRGIQKEDIERGMVLVKPGSITPHTKFEGEVYVLKKEEGGRHTPFFAGYRPQFYIRTTDVTGQITAFTADDGSDVEMVMPGDRIKMTGELICPVAIEQGMRFAIREGGRTIGAGVVSKIIE.

One can recognise a tr-type G domain in the interval lysine 10–glutamate 204. Residues glycine 19 to threonine 26 form a G1 region. GTP is bound at residue glycine 19–threonine 26. Residue threonine 26 coordinates Mg(2+). The G2 stretch occupies residues glycine 60–asparagine 64. A G3 region spans residues aspartate 81 to glycine 84. GTP-binding positions include aspartate 81–histidine 85 and asparagine 136–aspartate 139. Positions asparagine 136–aspartate 139 are G4. A G5 region spans residues serine 174–leucine 176.

This sequence belongs to the TRAFAC class translation factor GTPase superfamily. Classic translation factor GTPase family. EF-Tu/EF-1A subfamily. As to quaternary structure, monomer.

The protein resides in the cytoplasm. It catalyses the reaction GTP + H2O = GDP + phosphate + H(+). In terms of biological role, GTP hydrolase that promotes the GTP-dependent binding of aminoacyl-tRNA to the A-site of ribosomes during protein biosynthesis. The chain is Elongation factor Tu from Synechococcus sp. (strain WH7803).